Reading from the N-terminus, the 1066-residue chain is Ribosomal protein S6 kinase delta-1 (1066 aa).

The PX domain maps to 8–132; it reads SADLARFYTV…DFFKGGIIND (125 aa). Residues 207-228 form a disordered region; sequence VASDSEQSKTEEERESRSLFPG. Basic and acidic residues predominate over residues 212–223; that stretch reads EQSKTEEERESR. The MIT domain maps to 277-305; sequence VQGESSPTRREAVKRRTAEYLMRAESISS. A phosphoserine mark is found at S282, S423, S427, S449, and S455. A Protein kinase 1 domain is found at 344–445; the sequence is GVIDKVLLVM…PTLAKVHLQQ (102 aa). The disordered stretch occupies residues 441–509; that stretch reads VHLQQPTSSP…SGSSSEEECT (69 aa). A compositionally biased stretch (low complexity) spans 448 to 458; sequence SSPQDSSSFES. The segment covering 474–483 has biased composition (polar residues); sequence SSLTPSSQDD. Over residues 492–503 the composition is skewed to low complexity; it reads DSSPKWPDSGSS. Residues S494, S528, S583, S605, S608, S640, S661, S664, S667, and S794 each carry the phosphoserine modification. A disordered region spans residues 553-596; that stretch reads HLAADSDSPSTQLRAHELKFFPNDDPEAVSSPRTSDSLSRSKNS. Positions 582-593 are enriched in low complexity; it reads SSPRTSDSLSRS. A Protein kinase 2 domain is found at 794–1056; it reads SSDPKFQGLG…VEDIKSHPFF (263 aa). ATP-binding positions include 801 to 809 and R820; that span reads GLGVVESAV. S872 bears the Phosphoserine mark. D929 serves as the catalytic Proton acceptor.

This sequence belongs to the protein kinase superfamily. Ser/Thr protein kinase family. S6 kinase subfamily. Interacts with SPHK1 and phosphatidylinositol 3-phosphate. Interacts (via PX domain) with PRDX3. As to expression, highly expressed in testis, skeletal muscle, brain, heart, placenta, kidney and liver and weakly expressed in thymus, small intestine, lung and colon.

It is found in the cytoplasm. It localises to the membrane. The protein resides in the early endosome. The catalysed reaction is L-seryl-[protein] + ATP = O-phospho-L-seryl-[protein] + ADP + H(+). It catalyses the reaction L-threonyl-[protein] + ATP = O-phospho-L-threonyl-[protein] + ADP + H(+). Its function is as follows. May be involved in transmitting sphingosine-1 phosphate (SPP)-mediated signaling into the cell. Plays a role in the recruitment of PRDX3 to early endosomes. The sequence is that of Ribosomal protein S6 kinase delta-1 (RPS6KC1) from Homo sapiens (Human).